The chain runs to 155 residues: 6,7-dimethyl-8-ribityllumazine synthase (155 aa).

5-amino-6-(D-ribitylamino)uracil is bound by residues F23, 57 to 59, and 83 to 85; these read AFE and AVI. 88–89 lines the (2S)-2-hydroxy-3-oxobutyl phosphate pocket; sequence AT. The active-site Proton donor is H91. 5-amino-6-(D-ribitylamino)uracil is bound at residue F114. Position 128 (R128) interacts with (2S)-2-hydroxy-3-oxobutyl phosphate.

The protein belongs to the DMRL synthase family.

It catalyses the reaction (2S)-2-hydroxy-3-oxobutyl phosphate + 5-amino-6-(D-ribitylamino)uracil = 6,7-dimethyl-8-(1-D-ribityl)lumazine + phosphate + 2 H2O + H(+). It functions in the pathway cofactor biosynthesis; riboflavin biosynthesis; riboflavin from 2-hydroxy-3-oxobutyl phosphate and 5-amino-6-(D-ribitylamino)uracil: step 1/2. Its function is as follows. Catalyzes the formation of 6,7-dimethyl-8-ribityllumazine by condensation of 5-amino-6-(D-ribitylamino)uracil with 3,4-dihydroxy-2-butanone 4-phosphate. This is the penultimate step in the biosynthesis of riboflavin. The chain is 6,7-dimethyl-8-ribityllumazine synthase from Leptospira biflexa serovar Patoc (strain Patoc 1 / Ames).